The sequence spans 186 residues: Riboflavin kinase (186 aa).

The Mg(2+) site is built by Thr-42 and Asn-44. The active-site Nucleophile is Glu-123.

This sequence belongs to the flavokinase family. Zn(2+) serves as cofactor. Requires Mg(2+) as cofactor.

It catalyses the reaction riboflavin + ATP = FMN + ADP + H(+). Its pathway is cofactor biosynthesis; FMN biosynthesis; FMN from riboflavin (ATP route): step 1/1. In terms of biological role, catalyzes the phosphorylation of riboflavin (vitamin B2) to form flavin mononucleotide (FMN) coenzyme. The chain is Riboflavin kinase (FMN1) from Eremothecium gossypii (strain ATCC 10895 / CBS 109.51 / FGSC 9923 / NRRL Y-1056) (Yeast).